Consider the following 524-residue polypeptide: Ribonuclease Y (524 aa).

Residues 3–23 (IVINLFLIIFASVVFFAAGFF) traverse the membrane as a helical segment. Residues 214-274 (ALSVVHIQSD…LRREHAKLTL (61 aa)) form the KH domain. In terms of domain architecture, HD spans 340-432 (LLQHSREVAM…VDAANVISLA (93 aa)).

This sequence belongs to the RNase Y family.

It is found in the cell membrane. Endoribonuclease that initiates mRNA decay. This Chlorobium luteolum (strain DSM 273 / BCRC 81028 / 2530) (Pelodictyon luteolum) protein is Ribonuclease Y.